A 1243-amino-acid chain; its full sequence is Inositol hexakisphosphate and diphosphoinositol-pentakisphosphate kinase 2 (1243 aa).

Serine 38 carries the post-translational modification Phosphoserine. Position 53 to 54 (53 to 54 (KK)) interacts with substrate. ATP is bound by residues arginine 134, lysine 187, histidine 194, and arginine 213. 213–214 (RK) provides a ligand contact to substrate. Serine 223 bears the Phosphoserine mark. Residues 237–240 (EEFM) and 246–248 (DVK) each bind ATP. Lysine 248 and arginine 262 together coordinate substrate. Residues serine 264, aspartate 309, and 321–323 (DVN) contribute to the ATP site. Position 326 to 329 (326 to 329 (SFVK)) interacts with substrate. A polyphosphoinositide-binding domain region spans residues 371 to 442 (PTTSGTMMEL…VLDIARQLLM (72 aa)). 2 disordered regions span residues 898 to 941 (KGCE…RDEV) and 957 to 1016 (HIHR…SPVS). The span at 915–941 (ASRENEGRRPFKIDNDDEPHTSKRDEV) shows a compositional bias: basic and acidic residues. Positions 958-969 (IHRKSPLPRSRK) are enriched in basic residues. 7 positions are modified to phosphoserine: serine 1006, serine 1016, serine 1074, serine 1091, serine 1165, serine 1172, and serine 1180. Positions 1185–1243 (TPAKILPTPPATLKSTKASSKPATSGPSSAVVPNTSSRKKNITSKTETHEHKKNTGKKK) are disordered. Over residues 1195–1209 (ATLKSTKASSKPATS) the composition is skewed to low complexity. Over residues 1210–1220 (GPSSAVVPNTS) the composition is skewed to polar residues. Serine 1220 and serine 1221 each carry phosphoserine.

This sequence belongs to the histidine acid phosphatase family. VIP1 subfamily.

The protein resides in the cytoplasm. It is found in the cytosol. The catalysed reaction is 1D-myo-inositol hexakisphosphate + ATP = 1-diphospho-1D-myo-inositol 2,3,4,5,6-pentakisphosphate + ADP. It carries out the reaction 5-diphospho-1D-myo-inositol 1,2,3,4,6-pentakisphosphate + ATP + H(+) = 1,5-bis(diphospho)-1D-myo-inositol 2,3,4,6-tetrakisphosphate + ADP. Its function is as follows. Bifunctional inositol kinase that acts in concert with the IP6K kinases IP6K1, IP6K2 and IP6K3 to synthesize the diphosphate group-containing inositol pyrophosphates diphosphoinositol pentakisphosphate, PP-InsP5, and bis-diphosphoinositol tetrakisphosphate, (PP)2-InsP4. PP-InsP5 and (PP)2-InsP4, also respectively called InsP7 and InsP8, regulate a variety of cellular processes, including apoptosis, vesicle trafficking, cytoskeletal dynamics, exocytosis, insulin signaling and neutrophil activation. Phosphorylates inositol hexakisphosphate (InsP6) at position 1 to produce PP-InsP5 which is in turn phosphorylated by IP6Ks to produce (PP)2-InsP4. Alternatively, phosphorylates PP-InsP5 at position 1, produced by IP6Ks from InsP6, to produce (PP)2-InsP4. Required for normal hearing. In Homo sapiens (Human), this protein is Inositol hexakisphosphate and diphosphoinositol-pentakisphosphate kinase 2.